Reading from the N-terminus, the 211-residue chain is UPF0637 protein Bsph_1379 (211 aa).

The protein belongs to the UPF0637 family.

This is UPF0637 protein Bsph_1379 from Lysinibacillus sphaericus (strain C3-41).